The sequence spans 86 residues: U22-theraphotoxin-Cg1a (86 aa).

Residues 1–20 form the signal peptide; sequence MKVSVVLAITVLALLSVAYA. Positions 21–51 are excised as a propeptide; sequence SEFEEKELVKEVVRTIFLGKEDAALREETDR. 3 disulfide bridges follow: C53-C67, C60-C72, and C66-C79. A Phenylalanine amide modification is found at F85.

It belongs to the neurotoxin 10 (Hwtx-1) family. 42 (Jztx-44) subfamily. As to expression, expressed by the venom gland.

It localises to the secreted. In terms of biological role, probable ion channel inhibitor. The sequence is that of U22-theraphotoxin-Cg1a from Chilobrachys guangxiensis (Chinese earth tiger tarantula).